A 473-amino-acid chain; its full sequence is MATKTYNAGVKEYRSTYWEPHYTPKDTDILACFKITPQPGVDREEVAAAVAAESSTGTWTTVWTDLLTDLDYYKGRAYRIEDVPGDDTCFYAFVAYPIDLFEEGSVVNVLTSLVGNVFGFKALRALRSEDVRFPIAYVKTCGGPPHGIQVERDIMNKYGRPLLGCTIKPKLGLSGKNYGRAVYECLRGGLDFTKDDENVNSQPFMRWPQRFDFEQEAIEKAHGETGERKVHYLNVTAPTPGEMYKRAEYAKELGAPIIMHDYLTGGLCANTGLANWCRDNGMLLHIHRAMHAELDRNPHHGIHFRVLTKVLRLSGRDHLHSGTVVGKLEGDRASTLGWIDIMRDTFIKEDRSRGIFFDQDFGSMPGVMPVASGGIHVWHMPALVNIFGDDSVLQFGGGTVGHPWGNAPGATANRVELEACVKARNEGIAVEKEGKAVLTEAANDSPELKIAMETWKEIKFEFDTVDKLDIAHK.

Substrate-binding residues include asparagine 116 and threonine 166. Lysine 168 serves as the catalytic Proton acceptor. Lysine 170 provides a ligand contact to substrate. Residues lysine 194, aspartate 196, and glutamate 197 each contribute to the Mg(2+) site. N6-carboxylysine is present on lysine 194. The active-site Proton acceptor is histidine 287. Residues arginine 288, histidine 320, and serine 372 each coordinate substrate.

It belongs to the RuBisCO large chain family. Type I subfamily. Heterohexadecamer of 8 large chains and 8 small chains. Requires Mg(2+) as cofactor.

The catalysed reaction is 2 (2R)-3-phosphoglycerate + 2 H(+) = D-ribulose 1,5-bisphosphate + CO2 + H2O. The enzyme catalyses D-ribulose 1,5-bisphosphate + O2 = 2-phosphoglycolate + (2R)-3-phosphoglycerate + 2 H(+). RuBisCO catalyzes two reactions: the carboxylation of D-ribulose 1,5-bisphosphate, the primary event in carbon dioxide fixation, as well as the oxidative fragmentation of the pentose substrate. Both reactions occur simultaneously and in competition at the same active site. This is Ribulose bisphosphate carboxylase large chain from Hydrogenophaga pseudoflava (Pseudomonas carboxydoflava).